Consider the following 199-residue polypeptide: 3-isopropylmalate dehydratase small subunit (199 aa).

Belongs to the LeuD family. LeuD type 1 subfamily. In terms of assembly, heterodimer of LeuC and LeuD.

It carries out the reaction (2R,3S)-3-isopropylmalate = (2S)-2-isopropylmalate. It functions in the pathway amino-acid biosynthesis; L-leucine biosynthesis; L-leucine from 3-methyl-2-oxobutanoate: step 2/4. Catalyzes the isomerization between 2-isopropylmalate and 3-isopropylmalate, via the formation of 2-isopropylmaleate. This Bacillus pumilus (strain SAFR-032) protein is 3-isopropylmalate dehydratase small subunit.